The sequence spans 127 residues: Fumarate reductase subunit C (127 aa).

Helical transmembrane passes span 30–50, 67–87, and 107–127; these read ATIL…GCLV, IVVV…QTFF, and IIVL…LVLV.

The protein belongs to the FrdC family. As to quaternary structure, part of an enzyme complex containing four subunits: a flavoprotein (FrdA), an iron-sulfur protein (FrdB), and two hydrophobic anchor proteins (FrdC and FrdD).

The protein localises to the cell inner membrane. In terms of biological role, anchors the catalytic components of the fumarate reductase complex to the cell membrane, binds quinones. The protein is Fumarate reductase subunit C of Photobacterium profundum (strain SS9).